The sequence spans 232 residues: Enolase-phosphatase E1 (232 aa).

The protein belongs to the HAD-like hydrolase superfamily. MasA/MtnC family. Monomer. Requires Mg(2+) as cofactor.

It catalyses the reaction 5-methylsulfanyl-2,3-dioxopentyl phosphate + H2O = 1,2-dihydroxy-5-(methylsulfanyl)pent-1-en-3-one + phosphate. It participates in amino-acid biosynthesis; L-methionine biosynthesis via salvage pathway; L-methionine from S-methyl-5-thio-alpha-D-ribose 1-phosphate: step 3/6. It functions in the pathway amino-acid biosynthesis; L-methionine biosynthesis via salvage pathway; L-methionine from S-methyl-5-thio-alpha-D-ribose 1-phosphate: step 4/6. Bifunctional enzyme that catalyzes the enolization of 2,3-diketo-5-methylthiopentyl-1-phosphate (DK-MTP-1-P) into the intermediate 2-hydroxy-3-keto-5-methylthiopentenyl-1-phosphate (HK-MTPenyl-1-P), which is then dephosphorylated to form the acireductone 1,2-dihydroxy-3-keto-5-methylthiopentene (DHK-MTPene). The chain is Enolase-phosphatase E1 from Xanthomonas campestris pv. campestris (strain B100).